The following is a 224-amino-acid chain: MPLCGSSSSSKHPIERKIVILGDGACGKTSLLNVFTRGYFPKVYEPTVFENYIHDIFVDNQHITLSLWDTAGQEEFDRLRSLSYSDTHTIMLCFSVDSRDSLENVKNKWVSEIADHCEGVKLVLVALKCDLRSSDEYGNESAITPGSIQNQKYNGGGGNGLIPYDEGLAMAKQIGALRYLECSAKMNRGVNEAFTEAARCALTATPKGARDSAPEAESSSCTIM.

22 to 29 (GDGACGKT) serves as a coordination point for GTP. An Effector region motif is present at residues 44–52 (YEPTVFENY). GTP contacts are provided by residues 69 to 73 (DTAGQ) and 127 to 130 (LKCD). The disordered stretch occupies residues 205-224 (TPKGARDSAPEAESSSCTIM). The residue at position 221 (Cys221) is a Cysteine methyl ester. A lipid anchor (S-geranylgeranyl cysteine) is attached at Cys221. The propeptide at 222–224 (TIM) is removed in mature form.

It belongs to the small GTPase superfamily. Rho family.

It is found in the cell membrane. In terms of biological role, involved in the regulation of actin polarization. Rho proteins are required for distinct steps during polarized hyphal growth of A.gossypii. The sequence is that of GTP-binding protein RHO3 (RHO3) from Eremothecium gossypii (strain ATCC 10895 / CBS 109.51 / FGSC 9923 / NRRL Y-1056) (Yeast).